A 638-amino-acid polypeptide reads, in one-letter code: Phosphomethylpyrimidine synthase (638 aa).

Residues asparagine 243, methionine 272, tyrosine 301, histidine 337, 357-359 (SRG), 398-401 (DGLR), and glutamate 437 contribute to the substrate site. Histidine 441 serves as a coordination point for Zn(2+). Tyrosine 464 lines the substrate pocket. Histidine 505 lines the Zn(2+) pocket. Positions 585, 588, and 593 each coordinate [4Fe-4S] cluster.

It belongs to the ThiC family. Homodimer. [4Fe-4S] cluster serves as cofactor.

It catalyses the reaction 5-amino-1-(5-phospho-beta-D-ribosyl)imidazole + S-adenosyl-L-methionine = 4-amino-2-methyl-5-(phosphooxymethyl)pyrimidine + CO + 5'-deoxyadenosine + formate + L-methionine + 3 H(+). It functions in the pathway cofactor biosynthesis; thiamine diphosphate biosynthesis. Catalyzes the synthesis of the hydroxymethylpyrimidine phosphate (HMP-P) moiety of thiamine from aminoimidazole ribotide (AIR) in a radical S-adenosyl-L-methionine (SAM)-dependent reaction. This Dechloromonas aromatica (strain RCB) protein is Phosphomethylpyrimidine synthase.